Consider the following 506-residue polypeptide: Ribose import ATP-binding protein RbsA 1 (506 aa).

2 ABC transporter domains span residues 5–241 and 254–498; these read LALT…VGRR and RDAA…TSDA. 37 to 44 contacts ATP; sequence GENGAGKS.

The protein belongs to the ABC transporter superfamily. Ribose importer (TC 3.A.1.2.1) family. The complex is composed of an ATP-binding protein (RbsA), two transmembrane proteins (RbsC) and a solute-binding protein (RbsB).

Its subcellular location is the cell inner membrane. It catalyses the reaction D-ribose(out) + ATP + H2O = D-ribose(in) + ADP + phosphate + H(+). Functionally, part of the ABC transporter complex RbsABC involved in ribose import. Responsible for energy coupling to the transport system. This Burkholderia thailandensis (strain ATCC 700388 / DSM 13276 / CCUG 48851 / CIP 106301 / E264) protein is Ribose import ATP-binding protein RbsA 1.